Here is a 337-residue protein sequence, read N- to C-terminus: Nicotinate-nucleotide--dimethylbenzimidazole phosphoribosyltransferase (337 aa).

Glutamate 305 acts as the Proton acceptor in catalysis.

This sequence belongs to the CobT family.

The catalysed reaction is 5,6-dimethylbenzimidazole + nicotinate beta-D-ribonucleotide = alpha-ribazole 5'-phosphate + nicotinate + H(+). The protein operates within nucleoside biosynthesis; alpha-ribazole biosynthesis; alpha-ribazole from 5,6-dimethylbenzimidazole: step 1/2. Functionally, catalyzes the synthesis of alpha-ribazole-5'-phosphate from nicotinate mononucleotide (NAMN) and 5,6-dimethylbenzimidazole (DMB). In Roseobacter denitrificans (strain ATCC 33942 / OCh 114) (Erythrobacter sp. (strain OCh 114)), this protein is Nicotinate-nucleotide--dimethylbenzimidazole phosphoribosyltransferase.